The sequence spans 263 residues: Proliferating cell nuclear antigen (263 aa).

Residues 61-80 (RCDRNLSMGMNLNNMAKMLR) mediate DNA binding.

It belongs to the PCNA family. Homotrimer. Interacts with FEN1A. Interacts with POLL. Interacts with RAD/GEN1. Interacts with DJA7 and DJA8. Expressed in proliferating tissues. Expressed in roots and root apex. Expressed at low levels in young leaves. Not detected in mature leaves. Highly expressed in shoot apical meristem (SAM). Expressed in flag leaves and panicles.

Its subcellular location is the nucleus. Functionally, this protein is an auxiliary protein of DNA polymerase delta and is involved in the control of eukaryotic DNA replication by increasing the polymerase's processibility during elongation of the leading strand. The chain is Proliferating cell nuclear antigen from Oryza sativa subsp. japonica (Rice).